The following is a 466-amino-acid chain: Methylenetetrahydrofolate--tRNA-(uracil-5-)-methyltransferase TrmFO (466 aa).

10 to 15 (GGGLAG) serves as a coordination point for FAD.

Belongs to the MnmG family. TrmFO subfamily. Requires FAD as cofactor.

Its subcellular location is the cytoplasm. The catalysed reaction is uridine(54) in tRNA + (6R)-5,10-methylene-5,6,7,8-tetrahydrofolate + NADH + H(+) = 5-methyluridine(54) in tRNA + (6S)-5,6,7,8-tetrahydrofolate + NAD(+). It catalyses the reaction uridine(54) in tRNA + (6R)-5,10-methylene-5,6,7,8-tetrahydrofolate + NADPH + H(+) = 5-methyluridine(54) in tRNA + (6S)-5,6,7,8-tetrahydrofolate + NADP(+). Functionally, catalyzes the folate-dependent formation of 5-methyl-uridine at position 54 (M-5-U54) in all tRNAs. The chain is Methylenetetrahydrofolate--tRNA-(uracil-5-)-methyltransferase TrmFO from Phenylobacterium zucineum (strain HLK1).